The sequence spans 336 residues: tRNA-splicing endonuclease (336 aa).

Residues Tyr-271, His-282, and Lys-313 contribute to the active site.

It belongs to the tRNA-intron endonuclease family. Archaeal long subfamily. In terms of assembly, homodimer.

The enzyme catalyses pretRNA = a 3'-half-tRNA molecule with a 5'-OH end + a 5'-half-tRNA molecule with a 2',3'-cyclic phosphate end + an intron with a 2',3'-cyclic phosphate and a 5'-hydroxyl terminus.. Endonuclease that removes tRNA introns. Cleaves pre-tRNA at the 5'- and 3'-splice sites to release the intron. The products are an intron and two tRNA half-molecules bearing 2',3' cyclic phosphate and 5'-OH termini. Recognizes a pseudosymmetric substrate in which 2 bulged loops of 3 bases are separated by a stem of 4 bp. This Natronomonas pharaonis (strain ATCC 35678 / DSM 2160 / CIP 103997 / JCM 8858 / NBRC 14720 / NCIMB 2260 / Gabara) (Halobacterium pharaonis) protein is tRNA-splicing endonuclease.